The following is a 53-amino-acid chain: Natriuretic peptide DNP-2 (53 aa).

Cysteine 7 and cysteine 23 are joined by a disulfide. Positions 39–53 (IIRDLHPDSKQSQAA) are excised as a propeptide.

This sequence belongs to the natriuretic peptide family. Expressed by the venom gland.

The protein localises to the secreted. Its function is as follows. Exhibits vasodilator, natriuretic and diuretic properties in animal models and human tissues. Acts by stimulating cGMP via the natriuretic peptide receptor 1 (NPR1). Is a poor agonist of the atrial natriuretic peptide receptor 2 (NPR2). Is not degraded by neutral endopeptidase (NEP/MME). Binds to atrial natriuretic peptide clearance receptor (NPR-C/NPR3), which may be responsible of the removal of DNP from the circulation. Increases calcium uptake and induces histamine release from rat peritoneal mast cells. Increases calcium-activated potassium (KCa) current in gastric antral circular smooth muscle cells by increasing cGMP production and activating inositol trisphosphate receptors (IP3Rs). In vivo, reduces both systolic and diastolic blood pressure with no effect on heart rate, when intravenously injected in conscious rabbits. This chain is Natriuretic peptide DNP-2, found in Dendroaspis angusticeps (Eastern green mamba).